The chain runs to 892 residues: Ice-binding protein 1 (892 aa).

The first 23 residues, 1–23, serve as a signal peptide directing secretion; that stretch reads MNHSIKKTYLVFTMLLGFILLAG. A lipid anchor (N-palmitoyl cysteine) is attached at Cys-24. The S-diacylglycerol cysteine moiety is linked to residue Cys-24. BIG2 domains are found at residues 43 to 111, 134 to 205, 221 to 288, 306 to 386, 392 to 471, 478 to 558, and 565 to 638; these read TSIA…ITAS, TALA…SLGS, SIAL…ITAD, TSIM…TVTV, TSIA…TNLT, NSIV…NLTV, and SIDV…QASL. The short motif at 866–869 is the Ice-binding site motif (T-A/G-X-T/N) element; sequence TGAN.

The protein belongs to the ice-binding protein family.

It is found in the cell outer membrane. Functionally, ice-binding adhesion protein that adsorbs this bacterium onto ice to maintain a favorable position in its aquatic habitat. Inhibits growth of the ice crystals. Has high thermal hysteresis (TH) activity, which is the ability to lower the freezing point of an aqueous solution below its melting point. The TH activity of this protein is approximately 1.4 degrees Celsius at 25 uM and little below 2 degrees Celsius at 80 uM. This is Ice-binding protein 1 from Shewanella frigidimarina (strain NCIMB 400).